Here is a 461-residue protein sequence, read N- to C-terminus: Probable tubulin polyglutamylase TTLL9 (461 aa).

A compositionally biased stretch (polar residues) spans 1–10; the sequence is MSRQKNQNSK. A disordered region spans residues 1–20; sequence MSRQKNQNSKGHGVSKGKER. One can recognise a TTL domain in the interval 22 to 402; sequence QRTLIRFKTT…EARLTGKEKR (381 aa). ATP contacts are provided by residues lysine 149 and 155 to 156; that span reads QG. Glutamine 155 provides a ligand contact to a protein. Residues 172–208 are disordered; the sequence is RKGTSGKKPTGVETQPARANMNPSGSHDTRSSDDQKD. Over residues 198-208 the composition is skewed to basic and acidic residues; that stretch reads HDTRSSDDQKD. Residues 218–221 and 231–233 each bind ATP; these read QRYV and KFD. L-glutamate is bound at residue arginine 257. 276-277 lines the ATP pocket; it reads TN. Lysine 294 is an L-glutamate binding site. Mg(2+) is bound by residues aspartate 348, glutamate 361, and asparagine 363. Lysine 379 contributes to the L-glutamate binding site.

The protein belongs to the tubulin--tyrosine ligase family. Mg(2+) serves as cofactor. Highly expressed in brain and testis. Expressed in heart, kidney and lung. In the brain, expressed in ependymal cilia, cortex, corpus callosum and striatum. In the testis, specifically expressed in the seminiferous tubules.

The protein resides in the cytoplasm. It localises to the cytoskeleton. Its subcellular location is the cilium basal body. The protein localises to the flagellum axoneme. It catalyses the reaction (L-glutamyl)(n)-gamma-L-glutamyl-L-glutamyl-[protein] + L-glutamate + ATP = (L-glutamyl)(n+1)-gamma-L-glutamyl-L-glutamyl-[protein] + ADP + phosphate + H(+). In terms of biological role, probable tubulin polyglutamylase that generates side chains of glutamate on the gamma-carboxyl group of specific glutamate residues within the C-terminal tail of target proteins. Similar to TTLL1, may acquire enzymatic activity only in complex with other proteins as it is most likely lacking domains important for autonomous activity. Mediates tubulin polyglutamylation which induces establishment of microtubule heterogeneity in sperm flagella, thereby playing a role in normal motile flagella axoneme structure and sperm flagella beating pattern. In Mus musculus (Mouse), this protein is Probable tubulin polyglutamylase TTLL9.